The chain runs to 881 residues: DNA mismatch repair protein MutS (881 aa).

632-639 serves as a coordination point for ATP; it reads GPNMGGKS.

It belongs to the DNA mismatch repair MutS family.

In terms of biological role, this protein is involved in the repair of mismatches in DNA. It is possible that it carries out the mismatch recognition step. This protein has a weak ATPase activity. The polypeptide is DNA mismatch repair protein MutS (Acinetobacter baylyi (strain ATCC 33305 / BD413 / ADP1)).